Reading from the N-terminus, the 115-residue chain is Large ribosomal subunit protein eL30 (115 aa).

The protein belongs to the eukaryotic ribosomal protein eL30 family. Component of the large ribosomal subunit.

It localises to the cytoplasm. Functionally, component of the large ribosomal subunit. The ribosome is a large ribonucleoprotein complex responsible for the synthesis of proteins in the cell. The protein is Large ribosomal subunit protein eL30 (RPL30) of Gallus gallus (Chicken).